The following is a 158-amino-acid chain: uncharacterized protein (158 aa).

A run of 2 helical transmembrane segments spans residues 10–30 (LSSL…QFIV) and 137–157 (IEVF…AYFF).

It localises to the cell membrane. This is an uncharacterized protein from Bacillus subtilis (strain 168).